Consider the following 1811-residue polypeptide: ADP-ribosylation factor guanine nucleotide-exchange factor sec71 (1811 aa).

Disordered stretches follow at residues 1 to 108 (MTDL…TSEA) and 316 to 336 (INMN…PIPS). Composition is skewed to basic and acidic residues over residues 33-49 (STIK…HDSI), 57-73 (KSIE…KDIE), and 80-91 (PPEDDLDSRSIE). Phosphoserine is present on Ser-40. Polar residues-rich tracts occupy residues 92–108 (SEQT…TSEA) and 316–326 (INMNKSSSNGT). Phosphothreonine is present on Thr-326. Ser-332 and Ser-353 each carry phosphoserine. An HUS box motif is present at residues 533 to 537 (NYDCI). The span at 643-663 (TAKDDETESTSKGEEPQKSKS) shows a compositional bias: basic and acidic residues. The segment at 643–688 (TAKDDETESTSKGEEPQKSKSEPPSAGINSTSMDNLESSGQALATD) is disordered. The span at 669-688 (GINSTSMDNLESSGQALATD) shows a compositional bias: polar residues. The SEC7 domain maps to 692 to 880 (QFENLKHRKK…TEVYEEIQKN (189 aa)). A Phosphoserine modification is found at Ser-741. Thr-742 is modified (phosphothreonine). Asp-812 serves as a coordination point for Mg(2+). An HDS1 domain region spans residues 889-1103 (DPTSNFPEIP…TTKPLRKSLD (215 aa)).

Its subcellular location is the cytoplasm. The protein localises to the golgi apparatus. It is found in the trans-Golgi network. The protein resides in the cytoplasmic vesicle. It localises to the COPI-coated vesicle membrane. Its subcellular location is the COPII-coated vesicle membrane. Functionally, guanine exchange factor that acts as an activator of arf1 at the trans-Golgi net-work and is thus involved in vesicular budding and traffic between compartments of the Golgi apparatus. Activation of Arf (ADP-ribosylation factor) GTPases is essential for vesicle formation via recruitment of cargo adapters and coat proteins necessary for Golgi trafficking. Involved in tunicamycin-induced ER stress response and subsequent apoptosis. This is ADP-ribosylation factor guanine nucleotide-exchange factor sec71 from Schizosaccharomyces pombe (strain 972 / ATCC 24843) (Fission yeast).